The chain runs to 222 residues: Germin-like protein subfamily 1 member 20 (222 aa).

Residues 1 to 22 (MRVSQSLVPFAIIALVLSFVNA) form the signal peptide. An intrachain disulfide couples cysteine 32 to cysteine 48. Residues 62 to 213 (SGLNVPGNTN…AFQLDASVVK (152 aa)) form the Cupin type-1 domain. A glycan (N-linked (GlcNAc...) asparagine) is linked at asparagine 77. The Mn(2+) site is built by histidine 110, histidine 112, glutamate 117, and histidine 159.

This sequence belongs to the germin family. As to quaternary structure, oligomer (believed to be a pentamer but probably hexamer). In terms of tissue distribution, expressed in stems and developing embryos.

It is found in the secreted. The protein localises to the extracellular space. Its subcellular location is the apoplast. Its function is as follows. May play a role in plant defense. Probably has no oxalate oxidase activity even if the active site is conserved. The sequence is that of Germin-like protein subfamily 1 member 20 (GLP5A) from Arabidopsis thaliana (Mouse-ear cress).